A 296-amino-acid chain; its full sequence is Diaminopimelate epimerase (296 aa).

Residues N17, Q49, and N69 each contribute to the substrate site. The Proton donor role is filled by C78. Substrate-binding positions include 79-80 (GN), N171, N205, and 223-224 (ER). The Proton acceptor role is filled by C232. Substrate is bound at residue 233–234 (GT).

Belongs to the diaminopimelate epimerase family. As to quaternary structure, homodimer.

The protein resides in the cytoplasm. It carries out the reaction (2S,6S)-2,6-diaminopimelate = meso-2,6-diaminopimelate. The protein operates within amino-acid biosynthesis; L-lysine biosynthesis via DAP pathway; DL-2,6-diaminopimelate from LL-2,6-diaminopimelate: step 1/1. Catalyzes the stereoinversion of LL-2,6-diaminopimelate (L,L-DAP) to meso-diaminopimelate (meso-DAP), a precursor of L-lysine and an essential component of the bacterial peptidoglycan. The sequence is that of Diaminopimelate epimerase from Methylorubrum populi (strain ATCC BAA-705 / NCIMB 13946 / BJ001) (Methylobacterium populi).